A 414-amino-acid chain; its full sequence is Sensor protein CutS (414 aa).

Residues methionine 1–threonine 15 are compositionally biased toward pro residues. The disordered stretch occupies residues methionine 1–alanine 21. The next 2 membrane-spanning stretches (helical) occupy residues leucine 37–leucine 57 and serine 121–glycine 141. In terms of domain architecture, HAMP spans arginine 142–threonine 194. Positions asparagine 202–valine 414 constitute a Histidine kinase domain. Position 205 is a phosphohistidine; by autocatalysis (histidine 205).

The protein localises to the cell membrane. The catalysed reaction is ATP + protein L-histidine = ADP + protein N-phospho-L-histidine.. Its function is as follows. Member of the two-component regulatory system CutS/CutR, involved in the regulation of copper metabolism. This Streptomyces coelicolor (strain ATCC BAA-471 / A3(2) / M145) protein is Sensor protein CutS (cutS).